A 978-amino-acid chain; its full sequence is Exocyst complex component 5 (978 aa).

Polar residues predominate over residues 1-11; sequence MSWARNIQSRI. 2 disordered regions span residues 1–87 and 122–246; these read MSWA…TTTQ and TSPS…TTPY. 2 stretches are compositionally biased toward low complexity: residues 36-52 and 62-86; these read PSSP…TSLT and SQPT…TTTT. Polar residues predominate over residues 122-142; the sequence is TSPSMASPIGTSTGIQNPNAK. Over residues 143 to 245 the composition is skewed to low complexity; that stretch reads PSSLPSPSQS…QPTPIKQTTP (103 aa). The stretch at 303–325 forms a coiled coil; the sequence is NTQLQLSQLESNIDRRLDDLAEE.

Belongs to the SEC10 family. The exocyst complex is composed of sec3/exoc1, sec5/exoc2, sec6/exoc3, sec8/exoc4, sec10/exoc5, sec15/exoc6, exo70/exoc7 and exo84/exoc8.

Component of the exocyst complex involved in the docking of exocytic vesicles with fusion sites on the plasma membrane. The protein is Exocyst complex component 5 (exoc5) of Dictyostelium discoideum (Social amoeba).